A 129-amino-acid chain; its full sequence is Lysozyme C (129 aa).

The C-type lysozyme domain maps to 1 to 129 (KVYGRCELAA…VNAWIRGCRL (129 aa)). Disulfide bonds link Cys-6-Cys-127, Cys-30-Cys-115, Cys-64-Cys-80, and Cys-76-Cys-94. Active-site residues include Glu-35 and Asp-52.

This sequence belongs to the glycosyl hydrolase 22 family. As to quaternary structure, monomer.

The protein localises to the secreted. It catalyses the reaction Hydrolysis of (1-&gt;4)-beta-linkages between N-acetylmuramic acid and N-acetyl-D-glucosamine residues in a peptidoglycan and between N-acetyl-D-glucosamine residues in chitodextrins.. Functionally, lysozymes have primarily a bacteriolytic function; those in tissues and body fluids are associated with the monocyte-macrophage system and enhance the activity of immunoagents. The polypeptide is Lysozyme C (LYZ) (Syrmaticus reevesii (Reeves's pheasant)).